We begin with the raw amino-acid sequence, 822 residues long: Probable phosphoketolase (822 aa).

It belongs to the XFP family. It depends on thiamine diphosphate as a cofactor.

The protein is Probable phosphoketolase of Nocardia farcinica (strain IFM 10152).